We begin with the raw amino-acid sequence, 293 residues long: Aquaporin-6 (293 aa).

Residues M1–K22 lie on the Cytoplasmic side of the membrane. The helical transmembrane segment at A23–L43 threads the bilayer. Residues P44 to S51 lie on the Extracellular side of the membrane. Residues V52 to S70 form a helical membrane-spanning segment. Residues W71 to G75 are Cytoplasmic-facing. The discontinuously helical intramembrane region spans A76–A85. The NPA 1 signature appears at N79–A81. Residues Y86 to R96 are Cytoplasmic-facing. Residues A97–V118 form a helical membrane-spanning segment. Topologically, residues T119–T138 are extracellular. Residue N134 is glycosylated (N-linked (GlcNAc...) asparagine). Residues G139–S159 traverse the membrane as a helical segment. Residues M160 to T165 are Cytoplasmic-facing. A helical membrane pass occupies residues L166–I185. Over Y186–G189 the chain is Extracellular. The discontinuously helical intramembrane region spans C190–V202. Positions N193–A195 match the NPA 2 motif. Over I203–H210 the chain is Extracellular. The chain crosses the membrane as a helical span at residues W211–I231. Topologically, residues L232–C293 are cytoplasmic.

It belongs to the MIP/aquaporin (TC 1.A.8) family. In terms of assembly, homotetramer; each monomer provides an independent solute pore.

The protein resides in the cytoplasmic vesicle membrane. It carries out the reaction nitrate(in) = nitrate(out). The enzyme catalyses iodide(out) = iodide(in). The catalysed reaction is bromide(in) = bromide(out). It catalyses the reaction chloride(in) = chloride(out). It carries out the reaction Na(+)(in) = Na(+)(out). The enzyme catalyses H2O(in) = H2O(out). The catalysed reaction is CO2(out) = CO2(in). It catalyses the reaction NH4(+)(in) = NH4(+)(out). Its function is as follows. Aquaporins form homotetrameric transmembrane channels, with each monomer independently mediating water transport across the plasma membrane along its osmotic gradient. Unlike classical aquaporins, AQP6 is an intracellular channel with selective anion permeability, particularly for nitrate, and exhibits very low water permeability. It may also facilitate the transport of gases, such as CO2 and NH4(+), as demonstrated in vitro. The chain is Aquaporin-6 from Mus musculus (Mouse).